A 468-amino-acid polypeptide reads, in one-letter code: Uronate isomerase (468 aa).

This sequence belongs to the metallo-dependent hydrolases superfamily. Uronate isomerase family.

It catalyses the reaction D-glucuronate = D-fructuronate. The enzyme catalyses aldehydo-D-galacturonate = keto-D-tagaturonate. It participates in carbohydrate metabolism; pentose and glucuronate interconversion. The protein is Uronate isomerase of Lachnospira eligens (strain ATCC 27750 / DSM 3376 / VPI C15-48 / C15-B4) (Eubacterium eligens).